We begin with the raw amino-acid sequence, 331 residues long: Glycerol-3-phosphate dehydrogenase [NAD(P)+] (331 aa).

Residues W11, R30, and K105 each coordinate NADPH. Sn-glycerol 3-phosphate contacts are provided by K105, G134, and S136. An NADPH-binding site is contributed by A138. Residues K189, D242, S252, R253, and N254 each contribute to the sn-glycerol 3-phosphate site. The active-site Proton acceptor is the K189. R253 contacts NADPH. NADPH is bound by residues V277 and E279.

Belongs to the NAD-dependent glycerol-3-phosphate dehydrogenase family.

Its subcellular location is the cytoplasm. It carries out the reaction sn-glycerol 3-phosphate + NAD(+) = dihydroxyacetone phosphate + NADH + H(+). The catalysed reaction is sn-glycerol 3-phosphate + NADP(+) = dihydroxyacetone phosphate + NADPH + H(+). It participates in membrane lipid metabolism; glycerophospholipid metabolism. In terms of biological role, catalyzes the reduction of the glycolytic intermediate dihydroxyacetone phosphate (DHAP) to sn-glycerol 3-phosphate (G3P), the key precursor for phospholipid synthesis. The sequence is that of Glycerol-3-phosphate dehydrogenase [NAD(P)+] from Herminiimonas arsenicoxydans.